Here is a 927-residue protein sequence, read N- to C-terminus: MSKKRLHEIAKEIGKTSKEVVEQAQSLGLPVKSHASSVEENDATRIVESFSSSKTKAPTNSVQTNQGVKTESKTVETKQGLSDDKPSTQPVAKPKPQSRNFKAEREARAKAEAEKRQHNGDHRKNNRHNDTRSDDRRHQGQKRSNGNRNDNRQGQQNNRNKNDGRYADHKQKPQTRPQQPAGNRIDFKARAAALKAEQNAEYSRHSEQRFREEQEAKRQAAKEQELAKAAALKAQEEAQKAKEKLASKPVAKVKEIVNKVAATPSQTADSRRKKQTRSDKSRQFSNENEDGQKQTRNKKNWNNQNQVRNQRNSNWNHNKKNKKGKTNGAPKPVTERKFHELPKEFEYTEGMTVAEIAKRIKREPAEIVKKLFMMGVMATQNQSLDGDTIELLMVDYGIEAHAKVEVDEADIERFFADEDYLNPDNLTERPPVVTIMGHVDHGKTTLLDTLRNSRVATGEAGGITQHIGAYQIEEAGKKITFLDTPGHAAFTSMRARGASVTDITILIVAADDGVMPQTVEAINHSKAAGVPIIVAINKIDKPGANPERVISELAEHGVISTAWGGESEFVEISAKFGKNIQELLETVLLVAEMEELKADADVRAIGTVIEARLDKGKGAVATLLVQQGTLNVQDPIVVGNTFGRVRAMTNDLGRRVKVAGPSTPVSITGLNEAPMAGDHFAVYADEKAARAAGEERAKRALLKQRQNTQRVSLENLFDTLKAGEVKSVNVIIKADVQGSVEALAASLLKIDVEGVKVNVVHSAVGAINESDVTLAEASNAVIIGFNVRPTPQARQQADADDVEIRQHSIIYKVIEEVEEAMKGKLDPEYQEKILGEAIIRETFKVSKVGTIGGFMVINGKVTRDSSVRVIRDGVVIFDGKLASLKHYKDDVKEVGNAQEGGLMIENYNDLKEDDTIEAYIMEEIKRK.

The disordered stretch occupies residues 27–337; the sequence is LGLPVKSHAS…GAPKPVTERK (311 aa). The span at 49–69 shows a compositional bias: polar residues; the sequence is SFSSSKTKAPTNSVQTNQGVK. 2 stretches are compositionally biased toward basic and acidic residues: residues 70-86 and 101-138; these read TESKTVETKQGLSDDKP and FKAEREARAKAEAEKRQHNGDHRKNNRHNDTRSDDRRH. A compositionally biased stretch (low complexity) spans 146-159; the sequence is GNRNDNRQGQQNNR. Composition is skewed to basic and acidic residues over residues 160–171, 202–226, and 234–257; these read NKNDGRYADHKQ, YSRHSEQRFREEQEAKRQAAKEQEL, and AQEEAQKAKEKLASKPVAKVKEIV. The segment covering 300 to 316 has biased composition (low complexity); it reads NWNNQNQVRNQRNSNWN. The tr-type G domain occupies 428–597; it reads ERPPVVTIMG…LLVAEMEELK (170 aa). The segment at 437–444 is G1; the sequence is GHVDHGKT. GTP is bound at residue 437 to 444; the sequence is GHVDHGKT. Residues 462–466 form a G2 region; the sequence is GITQH. The interval 483–486 is G3; sequence DTPG. Residues 483-487 and 537-540 contribute to the GTP site; these read DTPGH and NKID. Residues 537–540 form a G4 region; it reads NKID. Residues 573 to 575 are G5; sequence SAK.

This sequence belongs to the TRAFAC class translation factor GTPase superfamily. Classic translation factor GTPase family. IF-2 subfamily.

It localises to the cytoplasm. In terms of biological role, one of the essential components for the initiation of protein synthesis. Protects formylmethionyl-tRNA from spontaneous hydrolysis and promotes its binding to the 30S ribosomal subunits. Also involved in the hydrolysis of GTP during the formation of the 70S ribosomal complex. The chain is Translation initiation factor IF-2 from Streptococcus agalactiae serotype V (strain ATCC BAA-611 / 2603 V/R).